The sequence spans 40 residues: Metallothionein-1 (40 aa).

Belongs to the metallothionein superfamily. Type 5 family.

Its function is as follows. This protein binds cations of several transition elements. It is thought to be involved in detoxification processes. This chain is Metallothionein-1 (MtnA), found in Drosophila melanogaster (Fruit fly).